The sequence spans 211 residues: Phosphoserine phosphatase (211 aa).

The Nucleophile role is filled by Asp-11. Mg(2+) is bound by residues Asp-11 and Asp-13. The Proton donor role is filled by Asp-13. Substrate is bound by residues Glu-20, Arg-56, 99–100, and Lys-144; that span reads SG. Asp-167 is a binding site for Mg(2+). Position 170 (Asn-170) interacts with substrate.

Belongs to the HAD-like hydrolase superfamily. SerB family. Mg(2+) serves as cofactor.

The enzyme catalyses O-phospho-L-serine + H2O = L-serine + phosphate. It catalyses the reaction O-phospho-D-serine + H2O = D-serine + phosphate. It participates in amino-acid biosynthesis; L-serine biosynthesis; L-serine from 3-phospho-D-glycerate: step 3/3. The protein is Phosphoserine phosphatase of Methanocaldococcus jannaschii (strain ATCC 43067 / DSM 2661 / JAL-1 / JCM 10045 / NBRC 100440) (Methanococcus jannaschii).